The following is a 293-amino-acid chain: LysM and putative peptidoglycan-binding domain-containing protein 4 (293 aa).

Residues methionine 1–glutamine 214 lie on the Extracellular side of the membrane. Residues phenylalanine 28–alanine 65 form a disordered region. Residue asparagine 30 is glycosylated (N-linked (GlcNAc...) asparagine). The LysM domain maps to leucine 71–isoleucine 115. A helical membrane pass occupies residues tryptophan 215–valine 235. Topologically, residues tyrosine 236–alanine 293 are cytoplasmic.

The protein localises to the membrane. The sequence is that of LysM and putative peptidoglycan-binding domain-containing protein 4 (Lysmd4) from Mus musculus (Mouse).